Here is a 713-residue protein sequence, read N- to C-terminus: Meiotic activator RIM4 (713 aa).

Residues 1 to 90 (MKTEISTADS…TSTSTESRGR (90 aa)) form a disordered region. Over residues 21–31 (ADSELVIREDI) the composition is skewed to basic and acidic residues. Positions 50 to 71 (GEDSDTDSDNFLQDPEDDVDEE) are enriched in acidic residues. A compositionally biased stretch (low complexity) spans 74-90 (GRGTVTTTSTSTESRGR). The RRM 1 domain occupies 93 to 172 (SCIFVASLAA…RRLRCEPAKV (80 aa)). A disordered region spans residues 276-337 (HQNNGIINND…SDGIYDDEDK (62 aa)). The segment covering 278 to 298 (NNGIINNDGSNNNDNNNSNNN) has biased composition (low complexity). Residues 299-327 (NREDSRRNGDVIEEECGHVHGSDSEEKLT) are compositionally biased toward basic and acidic residues. The region spanning 346-420 (RSIFVGQLDK…KTMHVQYKEV (75 aa)) is the RRM 2 domain. The segment at 524 to 609 (KSMPNSWSSP…KRYARRSSYG (86 aa)) is disordered. Ser-525 is modified (phosphoserine). A compositionally biased stretch (low complexity) spans 526–546 (MPNSWSSPSSKSVNSENESVN). Residues 563-574 (GRYNAANSFTTY) are compositionally biased toward polar residues. Positions 575-594 (NNSSAGNSNNNNNNNNSNSN) are enriched in low complexity.

In terms of processing, polyubiquitinated by RSP5.

In terms of biological role, positive regulator of sporulation-specific genes and of sporulation. Required for premeiotic DNA synthesis and meiotic chromosomal segregation. May act in a nutritional signaling pathway. The chain is Meiotic activator RIM4 (RIM4) from Saccharomyces cerevisiae (strain ATCC 204508 / S288c) (Baker's yeast).